The following is a 1300-amino-acid chain: Sal-like protein 3 (1300 aa).

The span at 1–11 (MSRRKQAKPQH) shows a compositional bias: basic residues. Disordered stretches follow at residues 1-51 (MSRR…EETS), 84-162 (EDAP…YGAP), 234-258 (QRPPPRPSLSPAAAPSAPGPAPSQL), and 277-352 (GSGP…GSLL). Residues 51–73 (SVCEKCCAEFFKWADFLEHQRSC) form a C2H2-type 1; atypical zinc finger. Positions 87-100 (PAPPPEDFPEPSPA) are enriched in pro residues. A Phosphoserine modification is found at S109. Residues 122-132 (GEARPVEKEAE) show a composition bias toward basic and acidic residues. A compositionally biased stretch (pro residues) spans 145–157 (PRPPPAAPAPPTP). Low complexity-rich tracts occupy residues 277–319 (GSGP…AAPA) and 329–352 (PQSAASSQPQSASTPPALAPGSLL). C2H2-type zinc fingers lie at residues 420–442 (HKCRFCAKVFGSDSALQIHLRSH) and 448–470 (FKCNICGNRFSTKGNLKVHFQRH). The disordered stretch occupies residues 523-633 (PTSVGLQLPP…VDGAPTSLGS (111 aa)). Over residues 543-561 (SPSATPASRSPQRPSPASS) the composition is skewed to low complexity. Polar residues predominate over residues 577–586 (VSATAESPQS). C2H2-type zinc fingers lie at residues 679–701 (NQCVICHRVLSCQSALKMHYRTH), 707–729 (FKCKICGRAFTTKGNLKTHFGVH), and 739–761 (HSCPICQKKFTNAVVLQQHIRMH). The tract at residues 864 to 955 (SVENGSGESD…GSGGAPGRAG (92 aa)) is disordered. Low complexity predominate over residues 889–910 (RSAGSPALSESSSSQALSPAPS). At S919 the chain carries Phosphoserine. 4 C2H2-type zinc fingers span residues 977-999 (TVCGVCGKPFACKSALEIHYRSH), 1005-1027 (FVCALCRRGCSTMGNLKQHLLTH), 1113-1135 (HNCQSCGKTFSSASALQIHERTH), and 1141-1163 (FGCTICGRAFTTKGNLKVHMGTH). S1177 is modified (phosphoserine). Positions 1259–1279 (GMDKARTGSSPPIVSLDKASS) are disordered.

Belongs to the sal C2H2-type zinc-finger protein family. Widely expressed in adult with highest levels in heart. Expressed in fetal brain (in neurons of hippocampus, cortex, mediodorsal and ventrolateral thalamic nuclei, putamen, cerebellum and brainstem).

It is found in the nucleus. Its function is as follows. Probable transcription factor. The sequence is that of Sal-like protein 3 (SALL3) from Homo sapiens (Human).